The chain runs to 1032 residues: Integrin alpha-4 (1032 aa).

An N-terminal signal peptide occupies residues M1 to C34. Over Y35 to V974 the chain is Extracellular. FG-GAP repeat units follow at residues N36–T100, K113–S177, D186–S237, Y238–L291, T292–E351, L353–P411, and Q415–T477. Residues N81 and N98 are each glycosylated (N-linked (GlcNAc...) asparagine). 3 disulfides stabilise this stretch: C91–C101, C144–C165, and C183–C198. N229 carries an N-linked (GlcNAc...) asparagine glycan. The Ca(2+) site is built by D314, N316, D318, L320, D322, D376, D378, D380, D384, D438, D440, N442, Y444, and D446. The N-linked (GlcNAc...) asparagine glycan is linked to N479. A disulfide bond links C485 and C494. N-linked (GlcNAc...) asparagine glycosylation is found at N496, N517, N537, N626, and N660. 2 cysteine pairs are disulfide-bonded: C500–C556 and C622–C627. The cysteines at positions 698 and 712 are disulfide-linked. Residues N746 and N857 are each glycosylated (N-linked (GlcNAc...) asparagine). 2 cysteine pairs are disulfide-bonded: C853–C889 and C896–C901. A helical membrane pass occupies residues I975 to W998. Residues K999–K1032 are Cytoplasmic-facing. The GFFKR motif signature appears at G1001–R1005.

It belongs to the integrin alpha chain family. Heterodimer of an alpha and a beta subunit.

The protein localises to the membrane. Its function is as follows. Fibronectin and V-CAM adhesion receptor. This chain is Integrin alpha-4 (itga4), found in Xenopus laevis (African clawed frog).